The following is a 274-amino-acid chain: Large ribosomal subunit protein uL2 (274 aa).

The tract at residues 221-256 is disordered; the sequence is RGTAMNPVDHPHGGGEGRNFGKHPVTPWGVPTKGYK.

Belongs to the universal ribosomal protein uL2 family. Part of the 50S ribosomal subunit. Forms a bridge to the 30S subunit in the 70S ribosome.

Functionally, one of the primary rRNA binding proteins. Required for association of the 30S and 50S subunits to form the 70S ribosome, for tRNA binding and peptide bond formation. It has been suggested to have peptidyltransferase activity; this is somewhat controversial. Makes several contacts with the 16S rRNA in the 70S ribosome. The sequence is that of Large ribosomal subunit protein uL2 from Thioalkalivibrio sulfidiphilus (strain HL-EbGR7).